A 101-amino-acid chain; its full sequence is NAD(P)H-quinone oxidoreductase subunit 4L, chloroplastic (101 aa).

3 helical membrane-spanning segments follow: residues 2-22 (MLEH…YGLI), 32-52 (MCLE…SDFF), and 61-81 (IFSI…PAIV).

This sequence belongs to the complex I subunit 4L family. In terms of assembly, NDH is composed of at least 16 different subunits, 5 of which are encoded in the nucleus.

The protein resides in the plastid. The protein localises to the chloroplast thylakoid membrane. It carries out the reaction a plastoquinone + NADH + (n+1) H(+)(in) = a plastoquinol + NAD(+) + n H(+)(out). It catalyses the reaction a plastoquinone + NADPH + (n+1) H(+)(in) = a plastoquinol + NADP(+) + n H(+)(out). Its function is as follows. NDH shuttles electrons from NAD(P)H:plastoquinone, via FMN and iron-sulfur (Fe-S) centers, to quinones in the photosynthetic chain and possibly in a chloroplast respiratory chain. The immediate electron acceptor for the enzyme in this species is believed to be plastoquinone. Couples the redox reaction to proton translocation, and thus conserves the redox energy in a proton gradient. The protein is NAD(P)H-quinone oxidoreductase subunit 4L, chloroplastic of Vitis vinifera (Grape).